The chain runs to 31 residues: Cyclopsychotride-A (31 aa).

The cyclopeptide (Ser-Asn) cross-link spans 1–31 (SIPCGESCVFIPCTVTALLGCSCKSKVCYKN). 3 disulfides stabilise this stretch: C4–C21, C8–C23, and C13–C28.

It belongs to the cyclotide family. Bracelet subfamily. This is a cyclic peptide.

Functionally, probably participates in a plant defense mechanism. Has antibiotic activity. Inhibits the cytopathic effects and replication of the human immunodeficiency virus. Active against both Gram-positive and Gram-negative bacteria. This Psychotria longipes protein is Cyclopsychotride-A.